The following is a 349-amino-acid chain: Lipoyl synthase (349 aa).

[4Fe-4S] cluster-binding residues include C55, C60, C66, C81, C85, C88, and S292. Positions W67–G281 constitute a Radical SAM core domain.

Belongs to the radical SAM superfamily. Lipoyl synthase family. The cofactor is [4Fe-4S] cluster.

It localises to the cytoplasm. It catalyses the reaction [[Fe-S] cluster scaffold protein carrying a second [4Fe-4S](2+) cluster] + N(6)-octanoyl-L-lysyl-[protein] + 2 oxidized [2Fe-2S]-[ferredoxin] + 2 S-adenosyl-L-methionine + 4 H(+) = [[Fe-S] cluster scaffold protein] + N(6)-[(R)-dihydrolipoyl]-L-lysyl-[protein] + 4 Fe(3+) + 2 hydrogen sulfide + 2 5'-deoxyadenosine + 2 L-methionine + 2 reduced [2Fe-2S]-[ferredoxin]. It functions in the pathway protein modification; protein lipoylation via endogenous pathway; protein N(6)-(lipoyl)lysine from octanoyl-[acyl-carrier-protein]: step 2/2. In terms of biological role, catalyzes the radical-mediated insertion of two sulfur atoms into the C-6 and C-8 positions of the octanoyl moiety bound to the lipoyl domains of lipoate-dependent enzymes, thereby converting the octanoylated domains into lipoylated derivatives. This chain is Lipoyl synthase, found in Corynebacterium diphtheriae (strain ATCC 700971 / NCTC 13129 / Biotype gravis).